We begin with the raw amino-acid sequence, 1403 residues long: Sushi, nidogen and EGF-like domain-containing protein 1 (1403 aa).

The first 24 residues, 1–24 (MRLGAAWALLLAAALGLGTRGVRA), serve as a signal peptide directing secretion. The region spanning 103 to 258 (AFWADVDNRR…GRWAFRIDDA (156 aa)) is the NIDO domain. 3 EGF-like domains span residues 268-309 (TTSV…RRCH), 311-347 (DVNE…PTCE), and 349-385 (AQSP…ATCE). Intrachain disulfides connect Cys272–Cys284, Cys278–Cys297, Cys299–Cys308, Cys315–Cys326, Cys320–Cys335, Cys337–Cys346, Cys353–Cys364, Cys358–Cys373, Cys375–Cys384, Cys391–Cys402, Cys396–Cys411, Cys413–Cys422, Cys433–Cys444, Cys438–Cys453, Cys455–Cys464, Cys472–Cys480, Cys474–Cys488, and Cys490–Cys499. N-linked (GlcNAc...) asparagine glycosylation is present at Asn292. Positions 387–423 (DVDECSSDPCQNGGSCVDLVGNYSCICVEPFEGPQCE) constitute an EGF-like 4; calcium-binding domain. N-linked (GlcNAc...) asparagine glycosylation is present at Asn408. EGF-like domains lie at 429-465 (VPSP…LDCR) and 468-500 (ILND…LLCE). N-linked (GlcNAc...) asparagine glycosylation occurs at Asn484. Asn536 carries an N-linked (GlcNAc...) asparagine glycan. EGF-like domains are found at residues 541–577 (LPSP…RHCE), 580–616 (RPHL…RHCE), 619–655 (KPDS…RHCE), and 657–693 (APSP…HRCQ). 26 cysteine pairs are disulfide-bonded: Cys545–Cys556, Cys550–Cys565, Cys567–Cys576, Cys584–Cys595, Cys589–Cys604, Cys606–Cys615, Cys623–Cys634, Cys628–Cys643, Cys645–Cys654, Cys661–Cys672, Cys666–Cys681, Cys683–Cys692, Cys698–Cys739, Cys724–Cys751, Cys757–Cys768, Cys762–Cys777, Cys779–Cys788, Cys795–Cys806, Cys800–Cys815, Cys817–Cys826, Cys833–Cys844, Cys838–Cys853, Cys855–Cys864, Cys871–Cys882, Cys876–Cys891, and Cys893–Cys902. The 58-residue stretch at 696–753 (VDCGHPEEVEHATMRFNGTHVGSVALYTCEPGFSLSALSHIRVCQPQGVWSQPPQCIE) folds into the Sushi domain. Asn712 carries N-linked (GlcNAc...) asparagine glycosylation. In terms of domain architecture, EGF-like 11; calcium-binding spans 753–789 (EVDECRSQPCLHGGSCQDLIADYQCLCSPGYEGVHCE). Residues 791–827 (ETDECQAQPCRNGGSCRDLPRAFICQCPEGFVGIHCE) form the EGF-like 12; calcium-binding domain. EGF-like domains are found at residues 829-865 (EVDA…YNCE) and 867-903 (VSDP…KDCT). Asn886 carries an N-linked (GlcNAc...) asparagine glycan. 3 Fibronectin type-III domains span residues 908-1006 (PPTA…TRPR), 1007-1105 (PIED…TRPL), and 1106-1200 (PPAN…SPRD). 5 N-linked (GlcNAc...) asparagine glycosylation sites follow: Asn977, Asn1015, Asn1109, Asn1139, and Asn1298. The EGF-like 15 domain occupies 1306–1342 (TPGSCSEDACQNGGTCVPGADAHSCDCRPGFKGRHCE). 3 disulfides stabilise this stretch: Cys1310-Cys1321, Cys1315-Cys1330, and Cys1332-Cys1341.

In terms of processing, phosphorylated on serine and threonine residues. Post-translationally, N-glycosylated. As to expression, expressed in lung.

The protein resides in the secreted. It localises to the extracellular space. The protein localises to the extracellular matrix. In Mus musculus (Mouse), this protein is Sushi, nidogen and EGF-like domain-containing protein 1.